Consider the following 418-residue polypeptide: Queuine tRNA-ribosyltransferase accessory subunit 2 (418 aa).

Positions 325, 327, 330, and 356 each coordinate Zn(2+).

This sequence belongs to the queuine tRNA-ribosyltransferase family. QTRT2 subfamily. As to quaternary structure, heterodimer of a catalytic subunit and an accessory subunit. It depends on Zn(2+) as a cofactor.

The protein localises to the cytoplasm. Its function is as follows. Non-catalytic subunit of the queuine tRNA-ribosyltransferase (TGT) that catalyzes the base-exchange of a guanine (G) residue with queuine (Q) at position 34 (anticodon wobble position) in tRNAs with GU(N) anticodons (tRNA-Asp, -Asn, -His and -Tyr), resulting in the hypermodified nucleoside queuosine (7-(((4,5-cis-dihydroxy-2-cyclopenten-1-yl)amino)methyl)-7-deazaguanosine). This is Queuine tRNA-ribosyltransferase accessory subunit 2 from Drosophila sechellia (Fruit fly).